We begin with the raw amino-acid sequence, 127 residues long: uncharacterized protein (127 aa).

A run of 3 helical transmembrane segments spans residues Asn-20–Ser-42, Ile-54–Tyr-76, and Trp-91–Thr-110.

The protein localises to the membrane. Its subcellular location is the cytoplasm. This is an uncharacterized protein from Schizosaccharomyces pombe (strain 972 / ATCC 24843) (Fission yeast).